The chain runs to 251 residues: Hydroxyacylglutathione hydrolase (251 aa).

Positions 53, 55, 57, 58, 110, 127, and 165 each coordinate Zn(2+).

The protein belongs to the metallo-beta-lactamase superfamily. Glyoxalase II family. Monomer. Zn(2+) serves as cofactor.

It catalyses the reaction an S-(2-hydroxyacyl)glutathione + H2O = a 2-hydroxy carboxylate + glutathione + H(+). It participates in secondary metabolite metabolism; methylglyoxal degradation; (R)-lactate from methylglyoxal: step 2/2. Its function is as follows. Thiolesterase that catalyzes the hydrolysis of S-D-lactoyl-glutathione to form glutathione and D-lactic acid. This chain is Hydroxyacylglutathione hydrolase, found in Shigella dysenteriae serotype 1 (strain Sd197).